Reading from the N-terminus, the 86-residue chain is RNA-binding protein Hfq (86 aa).

The Sm domain occupies 9 to 68; that stretch reads DPYLNTLRKEKVGVSIYLVNGIKLQGTIESFDQFVILLKNTVSQMVYKHAISTVVPVRPI.

The protein belongs to the Hfq family. Homohexamer.

In terms of biological role, RNA chaperone that binds small regulatory RNA (sRNAs) and mRNAs to facilitate mRNA translational regulation in response to envelope stress, environmental stress and changes in metabolite concentrations. Also binds with high specificity to tRNAs. The protein is RNA-binding protein Hfq of Pseudomonas savastanoi pv. phaseolicola (strain 1448A / Race 6) (Pseudomonas syringae pv. phaseolicola (strain 1448A / Race 6)).